The primary structure comprises 437 residues: Probable carboxypeptidase HCBG_00059 (437 aa).

The N-terminal stretch at 1–20 (MKLSNLAALLSASTVAPVAA) is a signal peptide. Asn-153 carries an N-linked (GlcNAc...) asparagine glycan. Asp-163 contacts Zn(2+). Glu-195 (proton acceptor) is an active-site residue. A Zn(2+)-binding site is contributed by Glu-196. Asn-346 is a glycosylation site (N-linked (GlcNAc...) asparagine).

It belongs to the peptidase M20A family. The cofactor is Zn(2+).

Its subcellular location is the secreted. The sequence is that of Probable carboxypeptidase HCBG_00059 from Ajellomyces capsulatus (strain G186AR / H82 / ATCC MYA-2454 / RMSCC 2432) (Darling's disease fungus).